Consider the following 1402-residue polypeptide: Phospholipid-transporting ATPase dnf2 (1402 aa).

Helical transmembrane passes span 109 to 129, 135 to 155, 457 to 477, and 501 to 521; these read FQNVANLFFLFLVILQSISIF, PGLAAVPLIVVVGITAVKDAI, LNFIILFSMCFVCAVVEGIAW, and VVTFFTGVILFQNLVPISLYI. Catalysis depends on D569, which acts as the 4-aspartylphosphate intermediate. Positions 569, 570, 571, 700, 741, 743, 746, 764, 799, 800, 879, 880, 881, 986, and 992 each coordinate ATP. D569 contacts Mg(2+). T571 is a Mg(2+) binding site. Position 1012 (D1012) interacts with Mg(2+). 2 residues coordinate ATP: N1015 and D1016. A Mg(2+)-binding site is contributed by D1016. 6 consecutive transmembrane segments (helical) span residues 1066-1086, 1101-1121, 1151-1171, 1193-1213, 1218-1238, and 1260-1280; these read VAEMVNNFFYKSVVWTFTLFW, YTYVMLFNLIFSSLPVIVMGV, IFIGYMLDGFYQSVICFFFSF, LGVYVAAPTIMVVDTYVILNQ, VFSIGLWALSCLTFWFWTGVY, and FWAVLCGTIVSCLFPKFLFMT. K1275 provides a ligand contact to a 1,2-diacyl-sn-glycero-3-phospho-L-serine.

The protein belongs to the cation transport ATPase (P-type) (TC 3.A.3) family. Type IV subfamily. It depends on Mg(2+) as a cofactor.

It localises to the cell membrane. Its subcellular location is the endoplasmic reticulum membrane. The catalysed reaction is ATP + H2O + phospholipidSide 1 = ADP + phosphate + phospholipidSide 2.. It catalyses the reaction a 1,2-diacyl-sn-glycero-3-phosphoethanolamine(out) + ATP + H2O = a 1,2-diacyl-sn-glycero-3-phosphoethanolamine(in) + ADP + phosphate + H(+). It carries out the reaction a 1,2-diacyl-sn-glycero-3-phosphocholine(out) + ATP + H2O = a 1,2-diacyl-sn-glycero-3-phosphocholine(in) + ADP + phosphate + H(+). The enzyme catalyses a beta-D-glucosyl-(1&lt;-&gt;1')-N-acylsphing-4-enine(out) + ATP + H2O = a beta-D-glucosyl-(1&lt;-&gt;1')-N-acylsphing-4-enine(in) + ADP + phosphate + H(+). The catalysed reaction is a 1,2-diacyl-sn-glycero-3-phospho-L-serine(out) + ATP + H2O = a 1,2-diacyl-sn-glycero-3-phospho-L-serine(in) + ADP + phosphate + H(+). In terms of biological role, catalytic component of a P4-ATPase flippase complex which catalyzes the hydrolysis of ATP coupled to the transport of glucosylceramide, phosphatidylcholine, phosphatidylethanolamine, and small amounts of phosphatidylserine from the lumenal to the cytosolic leaflet of the cell membrane and ensures the maintenance of asymmetric distribution of phospholipids. The sequence is that of Phospholipid-transporting ATPase dnf2 from Schizosaccharomyces pombe (strain 972 / ATCC 24843) (Fission yeast).